A 910-amino-acid chain; its full sequence is Protein translocase subunit SecA 1 (910 aa).

Residues glutamine 86, 104 to 108 (GEGKT), and aspartate 512 each bind ATP. Positions 894, 896, 905, and 906 each coordinate Zn(2+).

The protein belongs to the SecA family. In terms of assembly, monomer and homodimer. Part of the essential Sec protein translocation apparatus which comprises SecA, SecYEG and auxiliary proteins SecDF-YajC and YidC. Zn(2+) is required as a cofactor.

The protein resides in the cell inner membrane. The protein localises to the cytoplasm. The catalysed reaction is ATP + H2O + cellular proteinSide 1 = ADP + phosphate + cellular proteinSide 2.. Part of the Sec protein translocase complex. Interacts with the SecYEG preprotein conducting channel. Has a central role in coupling the hydrolysis of ATP to the transfer of proteins into and across the cell membrane, serving both as a receptor for the preprotein-SecB complex and as an ATP-driven molecular motor driving the stepwise translocation of polypeptide chains across the membrane. The protein is Protein translocase subunit SecA 1 of Bordetella avium (strain 197N).